Reading from the N-terminus, the 602-residue chain is Alpha-(1-&gt;6)-mannopyranosyltransferase B (602 aa).

13 helical membrane-spanning segments follow: residues 105–125, 148–168, 190–210, 244–264, 274–294, 320–340, 368–388, 404–424, 448–468, 472–492, 503–523, 546–566, and 571–591; these read IGTMGALMIAFGALGAGALPV, MIVLIGVGFLVLAWVLMAPLV, TFGAWVAPIMLTAPLFTQDIY, VPFIWAQSPSPYGPVALSIAA, IVGGVLAHRIASLLGVVAAGW, LILHLIGGIHNESILLGFLLV, GVLISCAGLVKVTGFIGLGFV, VVAIGVAGLVQVAALVITVVV, WMSMTTNIGVISGFIGMNLGL, TAAMLVVTRAAGIAVAAAFMV, IHAVGGLGVATFVLVILFPVV, LGVIAYSTAFSFFVLPRGLAL, and VFSIYFGAALGFSILLLVGWW.

Belongs to the MptA/B family.

The protein resides in the membrane. Its pathway is cell wall biogenesis; cell wall polysaccharide biosynthesis. Involved in the initiation of core alpha-(1-&gt;6) mannan biosynthesis of lipomannan (LM-A) and multi-mannosylated polymer (LM-B), extending triacylatedphosphatidyl-myo-inositol dimannoside (Ac1PIM2) and mannosylated glycolipid, 1,2-di-O-C16/C18:1-(alpha-D-mannopyranosyl)-(1-&gt;4)-(alpha-D-glucopyranosyluronic acid)-(1-&gt;3)-glycerol (Man1GlcAGroAc2), respectively. Catalyzes the addition of alpha-(1-&gt;6)-mannose residue. The chain is Alpha-(1-&gt;6)-mannopyranosyltransferase B (mptB) from Corynebacterium glutamicum (strain ATCC 13032 / DSM 20300 / JCM 1318 / BCRC 11384 / CCUG 27702 / LMG 3730 / NBRC 12168 / NCIMB 10025 / NRRL B-2784 / 534).